Consider the following 230-residue polypeptide: Thioredoxin domain-containing protein PLP3B (230 aa).

The Thioredoxin domain occupies Val-89–Phe-173. The interval Glu-199–Asp-230 is disordered. Polar residues predominate over residues Arg-220–Asp-230.

Belongs to the phosducin family. In terms of assembly, interacts with TUBB2, TUBB3, TUBB4 and TUBB5. In terms of tissue distribution, expressed in roots, cotyledons, leaves, stems and flowers.

It is found in the cytoplasm. It localises to the nucleus. Its function is as follows. Tubulin-binding protein involved in microtubule formation. This Arabidopsis thaliana (Mouse-ear cress) protein is Thioredoxin domain-containing protein PLP3B (PLP3B).